The primary structure comprises 388 residues: MNLHEYQAKQLFARYGMPAPTGYACTTPREAEEAASKIGSGPWVVKCQVHAGGRGKAGGVKVVNSKEDIRAFAEAWLGKRLVTYQTDALGQPVHQILVEAATDIDKELYLGAVVDRASRRVVFMASTEGGVEIEKVAEETPELIHKMTIDPLAGPQPYQGRELAFKLGLTGKQVGQFAKIFMGLATLFLERDLAMVEINPLVVTKQGDLICLDGKLGADGNALFRQPELREMRDLSQEDERESRAAQWELNYVALDGNIGCMVNGAGLAMGTMDIVKLHGGEPANFLDVGGGATKERVTEAFKIILSDDKVKAVLVNIFGGIVRCDLIADGIIGAVAEVGVNVPVVVRLEGNNAELGAKKLADSGLNIIAATSLTDAAQQVVAAVGSK.

An ATP-grasp domain is found at 9–244; that stretch reads KQLFARYGMP…LSQEDERESR (236 aa). ATP-binding positions include Lys46, 53 to 55, Glu99, Thr102, and Glu107; that span reads GRG. Positions 199 and 213 each coordinate Mg(2+). Residues Asn264 and 321-323 contribute to the substrate site; that span reads GIV.

This sequence belongs to the succinate/malate CoA ligase beta subunit family. Heterotetramer of two alpha and two beta subunits. Mg(2+) is required as a cofactor.

The catalysed reaction is succinate + ATP + CoA = succinyl-CoA + ADP + phosphate. It carries out the reaction GTP + succinate + CoA = succinyl-CoA + GDP + phosphate. It functions in the pathway carbohydrate metabolism; tricarboxylic acid cycle; succinate from succinyl-CoA (ligase route): step 1/1. Succinyl-CoA synthetase functions in the citric acid cycle (TCA), coupling the hydrolysis of succinyl-CoA to the synthesis of either ATP or GTP and thus represents the only step of substrate-level phosphorylation in the TCA. The beta subunit provides nucleotide specificity of the enzyme and binds the substrate succinate, while the binding sites for coenzyme A and phosphate are found in the alpha subunit. This chain is Succinate--CoA ligase [ADP-forming] subunit beta, found in Serratia proteamaculans (strain 568).